Consider the following 359-residue polypeptide: Fructose-bisphosphate aldolase (359 aa).

A D-glyceraldehyde 3-phosphate-binding site is contributed by Ser-61. Residue Asp-109 is the Proton donor of the active site. Residues His-110, Asp-144, Glu-174, and His-226 each coordinate Zn(2+). Residue Gly-227 coordinates dihydroxyacetone phosphate. His-265 lines the Zn(2+) pocket. Dihydroxyacetone phosphate-binding positions include 266-268 and 287-290; these read GGS and NIDT.

This sequence belongs to the class II fructose-bisphosphate aldolase family. Zn(2+) is required as a cofactor.

The enzyme catalyses beta-D-fructose 1,6-bisphosphate = D-glyceraldehyde 3-phosphate + dihydroxyacetone phosphate. Its pathway is carbohydrate degradation; glycolysis; D-glyceraldehyde 3-phosphate and glycerone phosphate from D-glucose: step 4/4. In terms of biological role, catalyzes the aldol condensation of dihydroxyacetone phosphate (DHAP or glycerone-phosphate) with glyceraldehyde 3-phosphate (G3P) to form fructose 1,6-bisphosphate (FBP) in gluconeogenesis and the reverse reaction in glycolysis. The polypeptide is Fructose-bisphosphate aldolase (fba) (Borreliella burgdorferi (strain ATCC 35210 / DSM 4680 / CIP 102532 / B31) (Borrelia burgdorferi)).